The following is a 414-amino-acid chain: S-adenosylmethionine synthase (414 aa).

Residue H11 coordinates ATP. Mg(2+) is bound at residue D13. E39 serves as a coordination point for K(+). E52 and Q95 together coordinate L-methionine. The flexible loop stretch occupies residues Q95–L105. ATP is bound by residues D169–K171, K245–F246, D254, R260–K261, A277, and K281. An L-methionine-binding site is contributed by D254. K285 contributes to the L-methionine binding site.

Belongs to the AdoMet synthase family. In terms of assembly, homotetramer; dimer of dimers. The cofactor is Mg(2+). K(+) is required as a cofactor.

It localises to the cytoplasm. It catalyses the reaction L-methionine + ATP + H2O = S-adenosyl-L-methionine + phosphate + diphosphate. It functions in the pathway amino-acid biosynthesis; S-adenosyl-L-methionine biosynthesis; S-adenosyl-L-methionine from L-methionine: step 1/1. Functionally, catalyzes the formation of S-adenosylmethionine (AdoMet) from methionine and ATP. The overall synthetic reaction is composed of two sequential steps, AdoMet formation and the subsequent tripolyphosphate hydrolysis which occurs prior to release of AdoMet from the enzyme. In Synechococcus sp. (strain JA-3-3Ab) (Cyanobacteria bacterium Yellowstone A-Prime), this protein is S-adenosylmethionine synthase.